Reading from the N-terminus, the 113-residue chain is Ribonuclease P protein component (113 aa).

It belongs to the RnpA family. As to quaternary structure, consists of a catalytic RNA component (M1 or rnpB) and a protein subunit.

It carries out the reaction Endonucleolytic cleavage of RNA, removing 5'-extranucleotides from tRNA precursor.. Its function is as follows. RNaseP catalyzes the removal of the 5'-leader sequence from pre-tRNA to produce the mature 5'-terminus. It can also cleave other RNA substrates such as 4.5S RNA. The protein component plays an auxiliary but essential role in vivo by binding to the 5'-leader sequence and broadening the substrate specificity of the ribozyme. The chain is Ribonuclease P protein component from Finegoldia magna (strain ATCC 29328 / DSM 20472 / WAL 2508) (Peptostreptococcus magnus).